The following is a 339-amino-acid chain: Dihydroorotase (339 aa).

Zn(2+) contacts are provided by His12 and His14. Substrate-binding positions include 14–16 (HVR) and Asn40. Positions 94, 133, 167, and 239 each coordinate Zn(2+). Residue Lys94 is modified to N6-carboxylysine. His133 contacts substrate. Residue Asp239 is part of the active site. Substrate contacts are provided by His243 and Ala255.

The protein belongs to the metallo-dependent hydrolases superfamily. DHOase family. Class II DHOase subfamily. In terms of assembly, homodimer. The cofactor is Zn(2+).

The enzyme catalyses (S)-dihydroorotate + H2O = N-carbamoyl-L-aspartate + H(+). It functions in the pathway pyrimidine metabolism; UMP biosynthesis via de novo pathway; (S)-dihydroorotate from bicarbonate: step 3/3. Functionally, catalyzes the reversible cyclization of carbamoyl aspartate to dihydroorotate. This Helicobacter pylori (strain J99 / ATCC 700824) (Campylobacter pylori J99) protein is Dihydroorotase.